Reading from the N-terminus, the 295-residue chain is Non-selective voltage-gated ion channel VDAC2 (295 aa).

ATP-binding residues include Lys-24 and Lys-32. Position 32 is an N6-acetyllysine; alternate (Lys-32). Lys-32 carries the N6-succinyllysine; alternate modification. Residue Lys-32 forms a Glycyl lysine isopeptide (Lys-Gly) (interchain with G-Cter in ubiquitin); alternate linkage. Beta stranded transmembrane passes span 38-47 (LVKLDVKTKS) and 51-59 (VEFSTSGSS). Lys-65 is covalently cross-linked (Glycyl lysine isopeptide (Lys-Gly) (interchain with G-Cter in ubiquitin)). Residues 66-76 (VSGTLETKYKW) traverse the membrane as a beta stranded segment. Tyr-79 bears the Phosphotyrosine mark. 3 consecutive transmembrane segments (beta stranded) span residues 81-88 (LTFTEKWN), 92-101 (TLGTEIAIED), and 107-116 (LKLTFDTTFS). Thr-119 carries the phosphothreonine modification. Residue Lys-121 is modified to N6-acetyllysine; alternate. A Glycyl lysine isopeptide (Lys-Gly) (interchain with G-Cter in ubiquitin); alternate cross-link involves residue Lys-121. A Glycyl lysine isopeptide (Lys-Gly) (interchain with G-Cter in ubiquitin) cross-link involves residue Lys-122. A run of 4 beta stranded transmembrane segments spans residues 123 to 132 (SGKIKSAYKR), 135 to 142 (INLGCDVD), 149 to 157 (AIHGSAVFG), and 162 to 170 (LAGYQMTFD). Residue Lys-173 forms a Glycyl lysine isopeptide (Lys-Gly) (interchain with G-Cter in ubiquitin) linkage. Beta stranded transmembrane passes span 175–187 (KLTRSNFAVGYRT), 190–197 (FQLHTNVN), 201–210 (EFGGSIYQKV), 214–223 (FDTSVNLAWT), 230–239 (RFGIAAKYQL), and 243–250 (ASISAKVN). Tyr-237 is modified (phosphotyrosine). Ser-252 is subject to Phosphoserine. NAD(+) is bound by residues 254–256 (LIG) and 272–276 (SALVD). 2 beta stranded membrane-spanning segments follow: residues 254–263 (LIGVGYTQTL) and 266–275 (GVKLTLSALV). Residue Lys-278 is modified to N6-acetyllysine; alternate. Residue Lys-278 forms a Glycyl lysine isopeptide (Lys-Gly) (interchain with G-Cter in ubiquitin); alternate linkage. Residues 285–294 (HKLGLALELE) traverse the membrane as a beta stranded segment.

This sequence belongs to the eukaryotic mitochondrial porin family. In terms of assembly, monomer, homodimer and higher order oligomers; formation of higher order structures is necessary for scramblase activity. Interacts with ARMC12 in a TBC1D21-dependent manner. Interacts with KLC3. Interacts with SPATA33. Interacts with PPP3CC in a SPATA33-dependent manner. In terms of processing, ubiquitinated by PRKN during mitophagy, leading to its degradation and enhancement of mitophagy. Deubiquitinated by USP30. In terms of tissue distribution, highly expressed in heart, kidney, brain and ascitic tumor with very low levels in liver. Expressed in the head region of epididymal sperm.

It localises to the mitochondrion outer membrane. It is found in the membrane. It carries out the reaction chloride(in) = chloride(out). It catalyses the reaction K(+)(in) = K(+)(out). The catalysed reaction is a 1,2-diacyl-sn-glycero-3-phospho-L-serine(in) = a 1,2-diacyl-sn-glycero-3-phospho-L-serine(out). The enzyme catalyses a 1,2-diacyl-sn-glycero-3-phosphocholine(in) = a 1,2-diacyl-sn-glycero-3-phosphocholine(out). It carries out the reaction a 1,2-diacyl-sn-glycero-3-phospho-(1D-myo-inositol)(in) = a 1,2-diacyl-sn-glycero-3-phospho-(1D-myo-inositol)(out). Functionally, non-selective voltage-gated ion channel that mediates the transport of anions and cations through the mitochondrion outer membrane and plasma membrane. The channel adopts an open conformation at zero mV and a closed conformation at both positive and negative potentials. There are two populations of channels; the main that functions in a lower open-state conductance with lower ion selectivity, that switch, in a voltage-dependent manner, from the open to a low-conducting 'closed' state and the other that has a normal ion selectivity in the typical high conductance, 'open' state. Binds various lipids, including the sphingolipid ceramide, the phospholipid phosphatidylcholine, and the sterols cholesterol and oxysterol. Binding of ceramide promotes the mitochondrial outer membrane permeabilization (MOMP) apoptotic pathway. In terms of biological role, catalyzes the scrambling of phospholipids across the outer mitochondrial membrane; the mechanism is unrelated to channel activity and is capable of translocating both anionic and zwitterionic phospholipids. This chain is Non-selective voltage-gated ion channel VDAC2, found in Rattus norvegicus (Rat).